Reading from the N-terminus, the 182-residue chain is UPF0397 protein YdcD (182 aa).

5 helical membrane-spanning segments follow: residues 8-28, 42-62, 74-94, 114-134, and 146-166; these read IVVATGIGAALFVIIGWLINI, AVLALFSALFGPLAGFLIGFI, APWWTWVLGSGLIGLFLAFGV, IVQFLANVVVWGIIAPIGDVL, and QGIVAGLVNALTIAVAGTLLL.

Belongs to the UPF0397 family.

The protein localises to the cell membrane. This chain is UPF0397 protein YdcD (ydcD), found in Lactococcus lactis subsp. lactis (strain IL1403) (Streptococcus lactis).